A 463-amino-acid polypeptide reads, in one-letter code: mRNA-capping enzyme subunit alpha (463 aa).

Lys-66 (N6-GMP-lysine intermediate) is an active-site residue. Residues 404–463 form a disordered region; sequence WEERKSKKRTHSSISGPMLPPVAETKAPREATQSRYIDDEDWSDEADDDDEDSLKRARIE. The segment covering 441–455 has biased composition (acidic residues); sequence DDEDWSDEADDDDED.

It belongs to the eukaryotic GTase family. As to quaternary structure, heterodimer. The mRNA-capping enzyme is composed of two separate chains alpha and beta, respectively a mRNA guanylyltransferase and an mRNA 5'-triphosphate monophosphatase.

Its subcellular location is the nucleus. It carries out the reaction a 5'-end diphospho-ribonucleoside in mRNA + GTP + H(+) = a 5'-end (5'-triphosphoguanosine)-ribonucleoside in mRNA + diphosphate. Functionally, second step of mRNA capping. Transfer of the GMP moiety of GTP to the 5'-end of RNA via an enzyme-GMP covalent reaction intermediate. The polypeptide is mRNA-capping enzyme subunit alpha (CEG1) (Eremothecium gossypii (strain ATCC 10895 / CBS 109.51 / FGSC 9923 / NRRL Y-1056) (Yeast)).